The sequence spans 111 residues: 2Fe-2S ferredoxin (111 aa).

The region spanning 5 to 107 (IKVTFVINNG…GIKVRLPSAT (103 aa)) is the 2Fe-2S ferredoxin-type domain. Positions 42, 48, 51, and 88 each coordinate [2Fe-2S] cluster.

It belongs to the adrenodoxin/putidaredoxin family. Requires [2Fe-2S] cluster as cofactor.

Functionally, ferredoxin are iron-sulfur proteins that transfer electrons in a wide variety of metabolic reactions. The polypeptide is 2Fe-2S ferredoxin (fdxB) (Rickettsia bellii (strain RML369-C)).